The chain runs to 794 residues: Signal transducer and activator of transcription 5A (794 aa).

Y90 is modified (phosphotyrosine). Residue S129 is modified to Phosphoserine. Positions 589 to 686 (WNDGAILGFV…EVFSKYYTPV (98 aa)) constitute an SH2 domain. Y682 carries the phosphotyrosine modification. Y694 carries the post-translational modification Phosphotyrosine; by JAK2. Residues 765–794 (EELLRRPNGQSGPLSPPPAGLFTPARGSLS) are disordered.

This sequence belongs to the transcription factor STAT family. As to quaternary structure, forms a homodimer or a heterodimer with a related family member. Binds NR3C1. Interacts with NCOA1 and SOCS7. Interacts with ERBB4. Interacts with EBF4. Interacts with CD69. Post-translationally, ISGylated. In terms of processing, tyrosine phosphorylated in response to KITLG/SCF, IL2, IL3, IL7, IL15, CSF2/GMCSF, GH1, PRL, EPO and THPO. Activated KIT promotes phosphorylation on tyrosine residues and subsequent translocation to the nucleus. Tyrosine phosphorylated in response to constitutively activated FGFR1, FGFR2, FGFR3 and FGFR4. Tyrosine phosphorylation is required for DNA-binding activity and dimerization. Serine phosphorylation is also required for maximal transcriptional activity. Tyrosine phosphorylated in response to signaling via activated FLT3; wild-type FLT3 results in much weaker phosphorylation than constitutively activated mutant FLT3. Alternatively, can be phosphorylated by JAK2 at Tyr-694. Found in mammary gland and, in lesser extent, in ovary, thymus, spleen, kidney, lung, muscle and adrenal gland.

The protein localises to the cytoplasm. Its subcellular location is the nucleus. Carries out a dual function: signal transduction and activation of transcription. Mediates cellular responses to the cytokine KITLG/SCF and other growth factors. May mediate cellular responses to activated FGFR1, FGFR2, FGFR3 and FGFR4. Binds to the GAS element and activates PRL-induced transcription. Regulates the expression of milk proteins during lactation. The protein is Signal transducer and activator of transcription 5A (STAT5A) of Ovis aries (Sheep).